Reading from the N-terminus, the 218-residue chain is Ras-related protein Rab-4A (218 aa).

9 residues coordinate GTP: Gly-23, Thr-24, Gly-25, Lys-26, Ser-27, Cys-28, Ser-42, His-44, and Thr-45. Residue Ser-27 coordinates Mg(2+). Positions 44–49 match the Switch 1 motif; it reads HTIGVE. Mg(2+) is bound by residues Thr-45 and Asp-68. The Switch 2 signature appears at 70-79; sequence AGQERFRSVT. Gly-71 is a GTP binding site. Gln-72 carries the post-translational modification 5-glutamyl serotonin. GTP contacts are provided by Asn-126, Lys-127, Asp-129, Ala-157, and Leu-158. Ser-190 carries the post-translational modification Phosphoserine. At Ser-204 the chain carries Phosphoserine; by CDK1. S-geranylgeranyl cysteine attachment occurs at residues Cys-216 and Cys-218. Cys-218 carries the cysteine methyl ester modification.

The protein belongs to the small GTPase superfamily. Rab family. In terms of assembly, interacts with SGSM1, SGSM2 and SGSM3. Interacts with RAB11FIP1, RABEP1, ZFYVE20 and RUFY1. Interacts (membrane-bound form) with NDRG1; the interaction involves NDRG1 in vesicular recycling of E-cadherin. Interacts (in GTP-bound form) with GRIPAP1 (via N-terminus). Interacts with RABEP1 and RBSN. Does not interact with HPS4. Interacts with RABEP2; this interaction may mediate VEGFR2 cell surface expression. Mg(2+) is required as a cofactor. Post-translationally, serotonylation of Gln-72 by TGM2 during activation and aggregation of platelets leads to constitutive activation of GTPase activity. In terms of processing, phosphorylated by CDK1 kinase during mitosis.

It is found in the membrane. It localises to the cytoplasm. The protein localises to the early endosome membrane. The protein resides in the recycling endosome membrane. It catalyses the reaction GTP + H2O = GDP + phosphate + H(+). Regulated by guanine nucleotide exchange factors (GEFs) which promote the exchange of bound GDP for free GTP. Regulated by GTPase activating proteins (GAPs) which increase the GTP hydrolysis activity. Inhibited by GDP dissociation inhibitors (GDIs). In terms of biological role, the small GTPases Rab are key regulators of intracellular membrane trafficking, from the formation of transport vesicles to their fusion with membranes. Rabs cycle between an inactive GDP-bound form and an active GTP-bound form that is able to recruit to membranes different sets of downstream effectors directly responsible for vesicle formation, movement, tethering and fusion. RAB4A is involved in protein transport. Also plays a role in vesicular traffic. Mediates VEGFR2 endosomal trafficking to enhance VEGFR2 signaling. Acts as a regulator of platelet alpha-granule release during activation and aggregation of platelets. In Rattus norvegicus (Rat), this protein is Ras-related protein Rab-4A.